A 396-amino-acid polypeptide reads, in one-letter code: SSTETPPSYNQLNYNENLLRFFNSKPVTAPVELDPPKVESSYVSSARGEDARSTLSPVQGFEGSGGSGSSGNFTTGSNLHMSSVTNTSNAGTGTSGTGNSGDGGGGGGANGTGSGAAPPVTLTESLLNKHNDEMEKFMLKKHRESRGRSGEKNKKSANEAMKMLEYSGPGPGHGHGIKRGGSHSWEGEANKPKQQLTLNTIGGGGGGGVGGGMPLFLDITHASSSSQNKGLAGVGVGGAGGVVGGGGSGTGLGGNGNVGSGNGNNNQPSTNQYTQSRLPCTQNINLWPPFSVGITTPTSVLSSHTAVPPSSFSPQHSLFPTFYYIPASIAASSPSSTNTNPNRPHKHAHVHNSSEKPSTSQAAAATMPLQYMTGVMYPHPSLFYTHPAAAAATAMV.

4 disordered regions span residues 27–120, 167–188, 253–275, and 333–362; these read VTAP…APPV, SGPG…WEGE, GGNG…QYTQ, and SPSS…TSQA. Over residues 93–114 the composition is skewed to gly residues; the sequence is GTSGTGNSGDGGGGGGANGTGS. Positions 253–262 are enriched in gly residues; that stretch reads GGNGNVGSGN. A compositionally biased stretch (low complexity) spans 333 to 342; the sequence is SPSSTNTNPN.

In terms of assembly, forms a heterodimer with timeless (TIM); the complex then translocates into the nucleus. Post-translationally, phosphorylated with a circadian rhythmicity, probably by the double-time protein (dbt). Phosphorylation could be implicated in the stability of per monomer and in the formation of heterodimer per-tim.

Its subcellular location is the nucleus. It localises to the cytoplasm. The protein localises to the perinuclear region. Its function is as follows. Essential for biological clock functions. Determines the period length of circadian and ultradian rhythms; an increase in PER dosage leads to shortened circadian rhythms and a decrease leads to lengthened circadian rhythms. Essential for the circadian rhythmicity of locomotor activity, eclosion behavior, and for the rhythmic component of the male courtship song that originates in the thoracic nervous system. The biological cycle depends on the rhythmic formation and nuclear localization of the TIM-PER complex. Light induces the degradation of TIM, which promotes elimination of PER. Nuclear activity of the heterodimer coordinatively regulates PER and TIM transcription through a negative feedback loop. Behaves as a negative element in circadian transcriptional loop. Does not appear to bind DNA, suggesting indirect transcriptional inhibition. This is Period circadian protein (per) from Drosophila paulistorum (Fruit fly).